A 434-amino-acid chain; its full sequence is UDP-N-acetylenolpyruvoylglucosamine reductase (434 aa).

An FAD-binding PCMH-type domain is found at 51–238; the sequence is IGAAPAGVVE…TAVEFQLTTD (188 aa). The active site involves R216. The Proton donor role is filled by S299. E425 is a catalytic residue.

The protein belongs to the MurB family. FAD is required as a cofactor.

Its subcellular location is the cytoplasm. It catalyses the reaction UDP-N-acetyl-alpha-D-muramate + NADP(+) = UDP-N-acetyl-3-O-(1-carboxyvinyl)-alpha-D-glucosamine + NADPH + H(+). It participates in cell wall biogenesis; peptidoglycan biosynthesis. Functionally, cell wall formation. In Corynebacterium jeikeium (strain K411), this protein is UDP-N-acetylenolpyruvoylglucosamine reductase.